The following is a 184-amino-acid chain: Oligoribonuclease (184 aa).

The Exonuclease domain maps to 7-170 (LIWIDLEMTG…DDIYESIEEL (164 aa)). The active site involves tyrosine 128.

Belongs to the oligoribonuclease family.

The protein localises to the cytoplasm. Functionally, 3'-to-5' exoribonuclease specific for small oligoribonucleotides. This Hydrogenovibrio crunogenus (strain DSM 25203 / XCL-2) (Thiomicrospira crunogena) protein is Oligoribonuclease.